The chain runs to 303 residues: Recombination-associated protein RdgC (303 aa).

It belongs to the RdgC family.

It is found in the cytoplasm. It localises to the nucleoid. Its function is as follows. May be involved in recombination. This Yersinia pseudotuberculosis serotype O:1b (strain IP 31758) protein is Recombination-associated protein RdgC.